A 636-amino-acid polypeptide reads, in one-letter code: Threonine--tRNA ligase (636 aa).

The TGS domain occupies 1 to 63; sequence MINITTSFPN…SKDGSVDPVT (63 aa). The interval 244 to 535 is catalytic; it reads DHRKIAKDLG…LIEHYAGNIP (292 aa). Zn(2+)-binding residues include cysteine 335, histidine 386, and histidine 512.

Belongs to the class-II aminoacyl-tRNA synthetase family. Homodimer. Requires Zn(2+) as cofactor.

The protein localises to the cytoplasm. The catalysed reaction is tRNA(Thr) + L-threonine + ATP = L-threonyl-tRNA(Thr) + AMP + diphosphate + H(+). In terms of biological role, catalyzes the attachment of threonine to tRNA(Thr) in a two-step reaction: L-threonine is first activated by ATP to form Thr-AMP and then transferred to the acceptor end of tRNA(Thr). Also edits incorrectly charged L-seryl-tRNA(Thr). The chain is Threonine--tRNA ligase from Anaplasma marginale (strain St. Maries).